We begin with the raw amino-acid sequence, 500 residues long: MKFLIKSLAVATISILGCLQTALAEEAKTESLTDKAVKHEKLGVKIESANHLFAEKYPLQYDSWKSTAKSTDRGSALEADPRYVILWAGYAFAKDYNKPRGHFYAVTDVRDILRTGAPKDENDGPQPMACWTCKGPDVPRLIEEKGERGYFDPKWAKYGAEIVNSIGCADCHDTTSEEFKQGKPALRVARPHVLRALNTVGWKFEDLDKHGKRPAVCANCHVEYYFKNKTDVTFPWDKGVDVDSIEKYYDEINFTDWTHALSKAPMLKTQHPDFEVWSQGTHGKNGVTCIDCHMPKVKDKDGKVYTDHKIGNPFDQFEATCKTCHEQSKETLEKRVKEYKHEVKEAMIRLEDQLVKAHFEAKAAWEAGATQEEMKEILMAIRHAQWRWDYSAAGHGNHFHAPDVMLRTIATGIDRAADARAKLGVVLAKHGVTTPVAIPDISTKEKAQLAIGLDIPKEQAAKDEFLKTVVPQWEKEARAKGLLPAEEADKPVAAPKAEAK.

A signal peptide spans 1–24 (MKFLIKSLAVATISILGCLQTALA). The heme c site is built by histidine 102, cysteine 130, cysteine 133, lysine 134, cysteine 168, cysteine 171, histidine 172, cysteine 217, cysteine 220, and histidine 221. The Ca(2+) site is built by glutamate 223, tyrosine 224, lysine 268, and glutamine 270. Residue tyrosine 224 coordinates substrate. Residue histidine 271 participates in substrate binding. Heme c-binding residues include histidine 282, cysteine 289, cysteine 292, histidine 293, histidine 308, cysteine 321, cysteine 324, histidine 325, and histidine 400. The interval 477-500 (ARAKGLLPAEEADKPVAAPKAEAK) is disordered.

This sequence belongs to the cytochrome c-552 family. It depends on Ca(2+) as a cofactor. The cofactor is heme c.

Its subcellular location is the periplasm. The enzyme catalyses 6 Fe(III)-[cytochrome c] + NH4(+) + 2 H2O = 6 Fe(II)-[cytochrome c] + nitrite + 8 H(+). It participates in nitrogen metabolism; nitrate reduction (assimilation). Functionally, catalyzes the reduction of nitrite to ammonia, consuming six electrons in the process. This chain is Cytochrome c-552, found in Mannheimia haemolytica (Pasteurella haemolytica).